The chain runs to 205 residues: MKQQSGLTMQQVVLATGNPGKVRELADLLAAFGLDIVAQTALGVESAEETGLTFIENAILKARHASAVTGLPAIADDSGLAVDVLGGAPGIYSARYAGEEATDRQNLDKLLAALNAVPDGERQAHFHCVLVYLRHAADPTPLVFHGSWTGEIAHSAAGVGGFGYDPIFFVPELGKTAAEMSKSEKLAVSHRGKALNLLLDAMKHG.

Position 16–21 (16–21 (TGNPGK)) interacts with substrate. 2 residues coordinate Mg(2+): Glu-48 and Asp-77. Asp-77 functions as the Proton acceptor in the catalytic mechanism. Substrate contacts are provided by residues Ser-78, 162–165 (FGYD), Lys-185, and 190–191 (HR).

The protein belongs to the HAM1 NTPase family. In terms of assembly, homodimer. The cofactor is Mg(2+).

The enzyme catalyses XTP + H2O = XMP + diphosphate + H(+). It catalyses the reaction dITP + H2O = dIMP + diphosphate + H(+). It carries out the reaction ITP + H2O = IMP + diphosphate + H(+). Its function is as follows. Pyrophosphatase that catalyzes the hydrolysis of nucleoside triphosphates to their monophosphate derivatives, with a high preference for the non-canonical purine nucleotides XTP (xanthosine triphosphate), dITP (deoxyinosine triphosphate) and ITP. Seems to function as a house-cleaning enzyme that removes non-canonical purine nucleotides from the nucleotide pool, thus preventing their incorporation into DNA/RNA and avoiding chromosomal lesions. The protein is dITP/XTP pyrophosphatase of Erwinia tasmaniensis (strain DSM 17950 / CFBP 7177 / CIP 109463 / NCPPB 4357 / Et1/99).